Consider the following 518-residue polypeptide: Arginyl-tRNA--protein transferase 1 (518 aa).

Phosphoserine is present on S169. Residues 175 to 203 are disordered; the sequence is EKLGSGEPSHSVKVHTVPKPGKGADLSKP.

Belongs to the R-transferase family. Monomer. Interacts with LIAT1; LIAT1 is not a substrate of ATE1, the interaction takes place in the cytoplasm and seems to increase ATE1 arginyltransferase activity.

It localises to the nucleus. It is found in the cytoplasm. It carries out the reaction an N-terminal L-alpha-aminoacyl-[protein] + L-arginyl-tRNA(Arg) = an N-terminal L-arginyl-L-aminoacyl-[protein] + tRNA(Arg) + H(+). Involved in the post-translational conjugation of arginine to the N-terminal aspartate or glutamate of a protein. This arginylation is required for degradation of the protein via the ubiquitin pathway. Does not arginylate cysteine residues. The sequence is that of Arginyl-tRNA--protein transferase 1 from Homo sapiens (Human).